The following is a 131-amino-acid chain: Large ribosomal subunit protein uL14m (131 aa).

It belongs to the universal ribosomal protein uL14 family. In terms of assembly, component of the mitochondrial large ribosomal subunit (mt-LSU). Mature N.crassa 74S mitochondrial ribosomes consist of a small (37S) and a large (54S) subunit. The 37S small subunit contains a 16S ribosomal RNA (16S mt-rRNA) and 32 different proteins. The 54S large subunit contains a 23S rRNA (23S mt-rRNA) and 42 different proteins.

The protein resides in the mitochondrion. In terms of biological role, component of the mitochondrial ribosome (mitoribosome), a dedicated translation machinery responsible for the synthesis of mitochondrial genome-encoded proteins, including at least some of the essential transmembrane subunits of the mitochondrial respiratory chain. The mitoribosomes are attached to the mitochondrial inner membrane and translation products are cotranslationally integrated into the membrane. This is Large ribosomal subunit protein uL14m (mrpl38) from Neurospora crassa (strain ATCC 24698 / 74-OR23-1A / CBS 708.71 / DSM 1257 / FGSC 987).